The chain runs to 137 residues: Structural protein A137R (137 aa).

Belongs to the asfivirus A137R family. Interacts with host TBK1.

Its subcellular location is the virion. The protein localises to the host cytoplasm. In terms of biological role, plays a role in the inhibition of the host innate immune response. Mechanistically, promotes the autophagy-mediated lysosomal degradation of host TBK1 and affects IRF3 nuclear translocation to block type I IFN production. The chain is Structural protein A137R from African swine fever virus (isolate Warthog/Namibia/Wart80/1980) (ASFV).